The chain runs to 672 residues: MNVLSSICYGGDYNPEQWPEEIWYEDAKLMQKAGVNLVSLGIFSWSKIEPSDGVFDFEWLDKVIDILYDHGVYINLGTATATTPAWFVKKYPDSLPIDESGVIFSFGSRQHYCPNHPQLITHIKRLVRAIAERYKNHPALKMWHVNNEYACHVSKCFCENCAVAFRKWLKERYKTIDELNERWGTNFWGQRYNHWDEINPPRKAPTFINPSQELDYYRFMNDSILKLFLTEKEILRGVTPDIPVSTNFMGSFKPLNYFQWAQHVDIVTWDSYPDPREGLPIQHAMMNDLMRSLRKGQPFILMEQVTSHVNWRDINVPKPPGVMRLWSYATIARGADGIMFFQWRQSRAGAEKFHGAMVPHFLNENNRIYREVTQLGQELKKLDCLVGSRIKAEVAIIFDWENWWAVELSSKPHNKLRYIPIVEAYYRELYKRNIAVDFVRPSDDLTKYKVVIAPMLYMVKEGEDENLRQFVANGGTLIVSFFSGIVDENDRVHLGGYPGPLRDILGIFVEEFVPYPETKVNKIYSNDGEYDCTTWADIIRLEGAEPLATFKGDWYAGLPAVTRNCYGKGEGIYVGTYPDSNYLGRLLEQVFAKHHINPILEVAENVEVQQRETDEWKYLIIINHNDYEVTLSLPEDKIYQNMIDGKCFRGGELRIQGVDVAVLREHDEAGKV.

Position 109 (Arg109) interacts with substrate. Residue Cys113 coordinates Zn(2+). Asn147 contributes to the substrate binding site. Residue Glu148 is the Proton donor of the active site. 3 residues coordinate Zn(2+): Cys156, Cys158, and Cys161. Glu303 serves as the catalytic Nucleophile. Substrate contacts are provided by residues Trp311 and 351-354 (EKFH).

It belongs to the glycosyl hydrolase 42 family.

The enzyme catalyses Hydrolysis of terminal non-reducing beta-D-galactose residues in beta-D-galactosides.. The chain is Beta-galactosidase BgaB from Geobacillus sp. (strain Y412MC61).